Consider the following 240-residue polypeptide: UDP-2,3-diacylglucosamine hydrolase (240 aa).

Positions 8, 10, 41, 79, and 114 each coordinate Mn(2+). 79 to 80 (NR) is a binding site for substrate. Substrate is bound by residues aspartate 122, serine 160, asparagine 164, lysine 167, and histidine 195. Mn(2+) is bound by residues histidine 195 and histidine 197.

The protein belongs to the LpxH family. Requires Mn(2+) as cofactor.

The protein localises to the cell inner membrane. The catalysed reaction is UDP-2-N,3-O-bis[(3R)-3-hydroxytetradecanoyl]-alpha-D-glucosamine + H2O = 2-N,3-O-bis[(3R)-3-hydroxytetradecanoyl]-alpha-D-glucosaminyl 1-phosphate + UMP + 2 H(+). The protein operates within glycolipid biosynthesis; lipid IV(A) biosynthesis; lipid IV(A) from (3R)-3-hydroxytetradecanoyl-[acyl-carrier-protein] and UDP-N-acetyl-alpha-D-glucosamine: step 4/6. Hydrolyzes the pyrophosphate bond of UDP-2,3-diacylglucosamine to yield 2,3-diacylglucosamine 1-phosphate (lipid X) and UMP by catalyzing the attack of water at the alpha-P atom. Involved in the biosynthesis of lipid A, a phosphorylated glycolipid that anchors the lipopolysaccharide to the outer membrane of the cell. This is UDP-2,3-diacylglucosamine hydrolase from Shigella boydii serotype 18 (strain CDC 3083-94 / BS512).